The sequence spans 506 residues: Histidine ammonia-lyase (506 aa).

The segment at residues 143 to 145 (ASG) is a cross-link (5-imidazolinone (Ala-Gly)). Serine 144 is subject to 2,3-didehydroalanine (Ser).

The protein belongs to the PAL/histidase family. In terms of processing, contains an active site 4-methylidene-imidazol-5-one (MIO), which is formed autocatalytically by cyclization and dehydration of residues Ala-Ser-Gly.

Its subcellular location is the cytoplasm. The enzyme catalyses L-histidine = trans-urocanate + NH4(+). It functions in the pathway amino-acid degradation; L-histidine degradation into L-glutamate; N-formimidoyl-L-glutamate from L-histidine: step 1/3. The sequence is that of Histidine ammonia-lyase from Citrobacter koseri (strain ATCC BAA-895 / CDC 4225-83 / SGSC4696).